We begin with the raw amino-acid sequence, 481 residues long: MSLNLVSEQLLAANGLKHQDLFAILGQLAERRLDYGDLYFQSSYHESWVLEDRIIKDGSYNIDQGVGVRAISGEKTGFAYADQISLLALEQSAQAARTIVRDSGDGKVQTLGAVEHSPLYTSVDPLQSMSREEKLDILRRVDKVAREADKRVQEVTASLSGVYELILVAATDGTLAADVRPLVRLSVSVLVEEDGKRERGASGGGGRFGYEFFLADLDGEVRADAWAKEAVRMALVNLSAVAAPAGTMPVVLGAGWPGVLLHEAVGHGLEGDFNRRGTSVFSGQVGELVASELCTVVDDGTMVDRRGSVAIDDEGTPGQYNVLIENGILKGYMQDKLNARLMGMTPTGNGRRESYAHLPMPRMTNTYMLPGKSTPQEIIESVEYGIYAPNFGGGQVDITSGKFVFSTSEAYLIENGKVTKPVKGATLIGSGIETMQQISMVGNDLKLDNGVGVCGKEGQSLPVGVGQPTLKVDNLTVGGTA.

This sequence belongs to the peptidase U62 family.

Its function is as follows. Metalloprotease involved in CcdA degradation. Suppresses the inhibitory activity of the carbon storage regulator (CsrA). The polypeptide is Metalloprotease TldD (tldD) (Escherichia coli (strain K12)).